The primary structure comprises 175 residues: Large ribosomal subunit protein uL6 (175 aa).

This sequence belongs to the universal ribosomal protein uL6 family. In terms of assembly, part of the 50S ribosomal subunit.

This protein binds to the 23S rRNA, and is important in its secondary structure. It is located near the subunit interface in the base of the L7/L12 stalk, and near the tRNA binding site of the peptidyltransferase center. This chain is Large ribosomal subunit protein uL6, found in Xylella fastidiosa (strain M12).